Reading from the N-terminus, the 180-residue chain is DPPPVHDTDGNELRADANYYVLPANRAHGGGLTMAPGHGRRCPLFVSQEADGQRDGLPVRIAPHGGAPSDKIIRLSTDVRISFRAYTTCVQSTEWHIDSELVSGRRHVITGPVRDPSPSGRENAFRIEKYSGAEVHEYKLMACGDSCQDLGVFRDLKGGAWFLGATEPYHVVVFKKAPPA.

Disulfide bonds link C42–C89 and C143–C147.

The protein belongs to the protease inhibitor I3 (leguminous Kunitz-type inhibitor) family.

In terms of biological role, inhibitor of endogenous alpha-amylase (wheat also produces an exogenous inhibitor which inactivates alpha-amylase from animal and insect origin). This inhibitor can also inhibit subtilisin. In Triticum aestivum (Wheat), this protein is Endogenous alpha-amylase/subtilisin inhibitor.